The chain runs to 238 residues: Uridylate kinase (238 aa).

12 to 15 (KVSG) contacts ATP. G54 contacts UMP. Residues G55 and R59 each coordinate ATP. Residues D74 and 135–142 (TGNPYFTT) contribute to the UMP site. ATP is bound by residues T162, N163, Y168, and D171.

The protein belongs to the UMP kinase family. In terms of assembly, homohexamer.

Its subcellular location is the cytoplasm. The catalysed reaction is UMP + ATP = UDP + ADP. The protein operates within pyrimidine metabolism; CTP biosynthesis via de novo pathway; UDP from UMP (UMPK route): step 1/1. Its activity is regulated as follows. Inhibited by UTP. Catalyzes the reversible phosphorylation of UMP to UDP. In Azorhizobium caulinodans (strain ATCC 43989 / DSM 5975 / JCM 20966 / LMG 6465 / NBRC 14845 / NCIMB 13405 / ORS 571), this protein is Uridylate kinase.